The sequence spans 511 residues: Maturase K (511 aa).

This sequence belongs to the intron maturase 2 family. MatK subfamily.

The protein resides in the plastid. It localises to the chloroplast. Usually encoded in the trnK tRNA gene intron. Probably assists in splicing its own and other chloroplast group II introns. In Paulownia tomentosa (Princess tree), this protein is Maturase K.